The chain runs to 187 residues: Elongation factor P (187 aa).

The protein belongs to the elongation factor P family.

The protein resides in the cytoplasm. The protein operates within protein biosynthesis; polypeptide chain elongation. Functionally, involved in peptide bond synthesis. Stimulates efficient translation and peptide-bond synthesis on native or reconstituted 70S ribosomes in vitro. Probably functions indirectly by altering the affinity of the ribosome for aminoacyl-tRNA, thus increasing their reactivity as acceptors for peptidyl transferase. This is Elongation factor P from Gloeobacter violaceus (strain ATCC 29082 / PCC 7421).